A 155-amino-acid polypeptide reads, in one-letter code: Small ribosomal subunit protein uS7cz/uS7cy (155 aa).

It belongs to the universal ribosomal protein uS7 family. Part of the 30S ribosomal subunit.

Its subcellular location is the plastid. The protein resides in the chloroplast. In terms of biological role, one of the primary rRNA binding proteins, it binds directly to 16S rRNA where it nucleates assembly of the head domain of the 30S subunit. The polypeptide is Small ribosomal subunit protein uS7cz/uS7cy (rps7-A) (Amborella trichopoda).